The following is a 299-amino-acid chain: Prohibitin-2 (299 aa).

N-acetylalanine is present on A2. The tract at residues M19–A49 is necessary for transcriptional repression. Y128 carries the phosphotyrosine modification. K147 bears the N6-acetyllysine mark. Residues A150–D174 form a necessary for transcriptional repression region. The residue at position 151 (S151) is a Phosphoserine. Positions S190–L238 form a coiled coil. Residues K200, K236, K250, and K262 each carry the N6-acetyllysine modification.

The protein belongs to the prohibitin family. In terms of assembly, the mitochondrial prohibitin complex consists of two subunits (PHB1 and PHB2), assembled into a membrane-associated ring-shaped supercomplex of approximately 1 mDa. Interacts with ESR1, HDAC1 and HDAC5. Interacts with ZNF703. Interacts with STOML2. Interacts with ARFGEF3. Interacts with SPHK2. Interacts with COX4I1; the interaction associates PHB2 with COX. Interacts with MAP1LC3B (membrane-bound form LC3-II); the interaction is direct and upon mitochondrial depolarization and proteasome-dependent outer membrane rupture. Interacts with IGFBP6 (via C-terminal domain). Interacts with CLPB. Interacts with CD86 (via cytoplasmic domain); the interactions increases after priming with CD40. Interacts with AFG3L2. Interacts with DNAJC19. Interacts with AKT2; this interaction may be important for myogenic differentiation. In terms of processing, phosphorylated. Tyrosine phosphorylation is indirectly stimulated by IGFBP6.

The protein localises to the mitochondrion inner membrane. It localises to the cytoplasm. Its subcellular location is the nucleus. It is found in the cell membrane. Protein with pleiotropic attributes mediated in a cell-compartment- and tissue-specific manner, which include the plasma membrane-associated cell signaling functions, mitochondrial chaperone, and transcriptional co-regulator of transcription factors and sex steroid hormones in the nucleus. Functionally, in the mitochondria, together with PHB, forms large ring complexes (prohibitin complexes) in the inner mitochondrial membrane (IMM) and functions as a chaperone protein that stabilizes mitochondrial respiratory enzymes and maintains mitochondrial integrity in the IMM, which is required for mitochondrial morphogenesis, neuronal survival, and normal lifespan. The prohibitin complex, with DNAJC19, regulates cardiolipin remodeling and the protein turnover of OMA1 in a cardiolipin-binding manner. Also regulates cytochrome-c oxidase assembly (COX) and mitochondrial respiration. Binding to sphingoid 1-phosphate (SPP) modulates its regulator activity. Has a key role of mitophagy receptor involved in targeting mitochondria for autophagic degradation. Involved in mitochondrial-mediated antiviral innate immunity, activates RIG-I-mediated signal transduction and production of IFNB1 and pro-inflammatory cytokine IL6. Its function is as follows. In the nucleus, serves as transcriptional co-regulator. Acts as a mediator of transcriptional repression by nuclear hormone receptors via recruitment of histone deacetylases. Functions as an estrogen receptor (ER)-selective coregulator that potentiates the inhibitory activities of antiestrogens and represses the activity of estrogens. Competes with NCOA1 for modulation of ER transcriptional activity. In terms of biological role, in the plasma membrane, is involved in IGFBP6-induced cell migration. Cooperates with CD86 to mediate CD86-signaling in B lymphocytes that regulates the level of IgG1 produced through the activation of distal signaling intermediates. Upon CD40 engagement, required to activate NF-kappa-B signaling pathway via phospholipase C and protein kinase C activation. The sequence is that of Prohibitin-2 from Rattus norvegicus (Rat).